Reading from the N-terminus, the 285-residue chain is MLYLTKISNAGSEFTENEQKIADFLQANVSELQSVSSRQMAKQLGISQSSIVKFAQKLGAQGFTELRMALIGEYSASREKTNATALHLHSSITSDDSLEVIARKLNREKELALEQTCALLDYARLQKIIEVISKAPFIQITGLGGSALVGRDLSFKLMKIGYRVACEADTHVQATVSQALKKGDVQIAISYSGSKKEIVLCAEAARKQGATVIAITSLTDSPLRRLAHFTLDTVSGETEWRSSSMSTRTAQNSVTDLLFVGLVQLNDVESLKMIQRSSELTQRLK.

The HTH rpiR-type domain maps to Met1–Ser77. The H-T-H motif DNA-binding region spans Ser37–Gln56. The region spanning Ile128–Val268 is the SIS domain.

Homotetramer.

It functions in the pathway amino-sugar metabolism; N-acetylmuramate degradation [regulation]. Its function is as follows. Represses the expression of the murPQ operon involved in the uptake and degradation of N-acetylmuramic acid (MurNAc). Binds to two adjacent inverted repeats within the operator region. MurNAc 6-phosphate, the substrate of MurQ, is the specific inducer that weakens binding of MurR to the operator. The chain is HTH-type transcriptional regulator MurR from Escherichia coli (strain K12 / MC4100 / BW2952).